A 365-amino-acid polypeptide reads, in one-letter code: Flagellar P-ring protein (365 aa).

The signal sequence occupies residues 1-21 (MKSLRLVALFCCLLPLGMAHA).

This sequence belongs to the FlgI family. As to quaternary structure, the basal body constitutes a major portion of the flagellar organelle and consists of four rings (L,P,S, and M) mounted on a central rod.

It localises to the periplasm. Its subcellular location is the bacterial flagellum basal body. Functionally, assembles around the rod to form the L-ring and probably protects the motor/basal body from shearing forces during rotation. The chain is Flagellar P-ring protein from Aeromonas hydrophila subsp. hydrophila (strain ATCC 7966 / DSM 30187 / BCRC 13018 / CCUG 14551 / JCM 1027 / KCTC 2358 / NCIMB 9240 / NCTC 8049).